A 305-amino-acid polypeptide reads, in one-letter code: Glycine--tRNA ligase alpha subunit (305 aa).

The protein belongs to the class-II aminoacyl-tRNA synthetase family. Tetramer of two alpha and two beta subunits.

The protein resides in the cytoplasm. It carries out the reaction tRNA(Gly) + glycine + ATP = glycyl-tRNA(Gly) + AMP + diphosphate. The sequence is that of Glycine--tRNA ligase alpha subunit from Streptococcus pneumoniae (strain ATCC 700669 / Spain 23F-1).